We begin with the raw amino-acid sequence, 577 residues long: Arginine--tRNA ligase (577 aa).

The 'HIGH' region signature appears at 122–132 (PNVAKEMHVGH).

Belongs to the class-I aminoacyl-tRNA synthetase family. Monomer.

It is found in the cytoplasm. The enzyme catalyses tRNA(Arg) + L-arginine + ATP = L-arginyl-tRNA(Arg) + AMP + diphosphate. This chain is Arginine--tRNA ligase, found in Escherichia coli O7:K1 (strain IAI39 / ExPEC).